The chain runs to 1028 residues: Contactin-3 (1028 aa).

An N-terminal signal peptide occupies residues 1 to 19 (MMFPWKQLILLSFIGCLGG). 6 Ig-like C2-type domains span residues 26-117 (PVFI…AKLQ), 122-208 (ENFK…ARVL), 227-313 (PKIE…GRLT), 318-402 (PHWV…AELK), 408-497 (PDFS…LVVT), and 499-593 (PTRI…ADLI). Intrachain disulfides connect C50–C100, C144–C196, C249–C297, C339–C386, and C431–C479. N-linked (GlcNAc...) asparagine glycans are attached at residues N65 and N193. N-linked (GlcNAc...) asparagine glycosylation is found at N375, N468, and N489. C521 and C577 are disulfide-bonded. Fibronectin type-III domains follow at residues 600–698 (PPEN…TEEA), 703–800 (PPSE…SAEE), 805–901 (APSQ…TKKT), and 902–998 (PPSQ…TSMD). Residues 684–713 (GEPSLPSEKVRTEEAVPEVPPSEVNGGGGS) form a disordered region. 6 N-linked (GlcNAc...) asparagine glycosylation sites follow: N765, N860, N895, N913, N931, and N956. Residue S1002 is the site of GPI-anchor amidated serine attachment. A propeptide spans 1003–1028 (TSAISNVHPMSSYMPIVLFLIVYVLW) (removed in mature form).

The protein belongs to the immunoglobulin superfamily. Contactin family. As to quaternary structure, interacts with PTPRG. In brain, it is expressed in frontal lobe, occipital lobe, cerebellum and amygdala.

Its subcellular location is the cell membrane. Its function is as follows. Contactins mediate cell surface interactions during nervous system development. Has some neurite outgrowth-promoting activity. This chain is Contactin-3 (CNTN3), found in Homo sapiens (Human).